The chain runs to 85 residues: Major outer membrane protein 1 (85 aa).

The N-terminal stretch at 1–18 (MEAREVEEMRRSRLLTLG) is a signal peptide. The helical transmembrane segment at 22–42 (YTAVIALAALVLVMGALGLVL) threads the bilayer.

In terms of assembly, forms extremely stable complexes with apparent masses of 150, 50, 45 and 38 kDa. Found in a ring-shaped complex of 7 nm diameter with a 2 nm channel through the middle. Complete denaturation requires temperatures over 110 degrees Celsius.

The protein localises to the cell outer membrane. The most abundant protein of the outer membrane, it forms a pore through it. In Ignicoccus hospitalis (strain KIN4/I / DSM 18386 / JCM 14125), this protein is Major outer membrane protein 1 (ihomp1).